The chain runs to 550 residues: Hydroxylamine reductase (550 aa).

Residues C3, C6, C18, and C25 each coordinate [2Fe-2S] cluster. Hybrid [4Fe-2O-2S] cluster is bound by residues H249, E273, C317, C405, C433, C458, E492, and K494. At C405 the chain carries Cysteine persulfide.

Belongs to the HCP family. It depends on [2Fe-2S] cluster as a cofactor. The cofactor is hybrid [4Fe-2O-2S] cluster.

Its subcellular location is the cytoplasm. It carries out the reaction A + NH4(+) + H2O = hydroxylamine + AH2 + H(+). Functionally, catalyzes the reduction of hydroxylamine to form NH(3) and H(2)O. The polypeptide is Hydroxylamine reductase (Salmonella typhi).